Here is a 247-residue protein sequence, read N- to C-terminus: 6-carboxyhexanoate--CoA ligase (247 aa).

This sequence belongs to the BioW family. As to quaternary structure, homodimer. The cofactor is Mg(2+).

It carries out the reaction heptanedioate + ATP + CoA = 6-carboxyhexanoyl-CoA + AMP + diphosphate. It participates in metabolic intermediate metabolism; pimeloyl-CoA biosynthesis; pimeloyl-CoA from pimelate: step 1/1. Its function is as follows. Catalyzes the transformation of pimelate into pimeloyl-CoA with concomitant hydrolysis of ATP to AMP. In Persephonella marina (strain DSM 14350 / EX-H1), this protein is 6-carboxyhexanoate--CoA ligase.